The chain runs to 123 residues: Small ribosomal subunit protein uS12 (123 aa).

Position 89 is a 3-methylthioaspartic acid (Asp89).

The protein belongs to the universal ribosomal protein uS12 family. As to quaternary structure, part of the 30S ribosomal subunit. Contacts proteins S8 and S17. May interact with IF1 in the 30S initiation complex.

Functionally, with S4 and S5 plays an important role in translational accuracy. Interacts with and stabilizes bases of the 16S rRNA that are involved in tRNA selection in the A site and with the mRNA backbone. Located at the interface of the 30S and 50S subunits, it traverses the body of the 30S subunit contacting proteins on the other side and probably holding the rRNA structure together. The combined cluster of proteins S8, S12 and S17 appears to hold together the shoulder and platform of the 30S subunit. The chain is Small ribosomal subunit protein uS12 from Rhodopseudomonas palustris (strain BisA53).